A 228-amino-acid polypeptide reads, in one-letter code: Ephrin-A5 (228 aa).

The first 20 residues, 1–20, serve as a signal peptide directing secretion; it reads MLHVEMLTLLFLVLWMCVFS. Residues 29–162 enclose the Ephrin RBD domain; that stretch reads ADRYAVYWNS…KLKVFVRPTN (134 aa). Asn-37 carries an N-linked (GlcNAc...) asparagine glycan. Disulfide bonds link Cys-62–Cys-102 and Cys-90–Cys-151. The N-linked (GlcNAc...) asparagine; atypical glycan is linked to Asn-162. Positions 186-205 are disordered; the sequence is EPADDTVHESAEPSRGENAA. A compositionally biased stretch (basic and acidic residues) spans 190–200; that stretch reads DTVHESAEPSR. Asn-203 carries the GPI-anchor amidated asparagine lipid modification. Residues 204–228 constitute a propeptide, removed in mature form; that stretch reads AAQTPRIPSRLLAILLFLLAMLLTL.

Belongs to the ephrin family. As to quaternary structure, binds to the receptor tyrosine kinases EPHA2, EPHA3 and EPHB1. Forms a ternary EFNA5-EPHA3-ADAM10 complex mediating EFNA5 extracellular domain shedding by ADAM10 which regulates the EFNA5-EPHA3 complex internalization and function. Binds to EPHB2. Interacts with EPHA8; activates EPHA8. Expressed in myogenic progenitor cells.

Its subcellular location is the cell membrane. It localises to the membrane. It is found in the caveola. Functionally, cell surface GPI-bound ligand for Eph receptors, a family of receptor tyrosine kinases which are crucial for migration, repulsion and adhesion during neuronal, vascular and epithelial development. Binds promiscuously Eph receptors residing on adjacent cells, leading to contact-dependent bidirectional signaling into neighboring cells. The signaling pathway downstream of the receptor is referred to as forward signaling while the signaling pathway downstream of the ephrin ligand is referred to as reverse signaling. Induces compartmentalized signaling within a caveolae-like membrane microdomain when bound to the extracellular domain of its cognate receptor. This signaling event requires the activity of the Fyn tyrosine kinase. Activates the EPHA3 receptor to regulate cell-cell adhesion and cytoskeletal organization. With the receptor EPHA2 may regulate lens fiber cells shape and interactions and be important for lens transparency maintenance. May function actively to stimulate axon fasciculation. The interaction of EFNA5 with EPHA5 also mediates communication between pancreatic islet cells to regulate glucose-stimulated insulin secretion. Cognate/functional ligand for EPHA7, their interaction regulates brain development modulating cell-cell adhesion and repulsion. The protein is Ephrin-A5 (Efna5) of Mus musculus (Mouse).